Reading from the N-terminus, the 496-residue chain is Sporulation-killing factor biosynthesis protein SkfC (496 aa).

The next 7 membrane-spanning stretches (helical) occupy residues 1–21 (MNSL…LLFI), 224–244 (VSGM…LVFM), 248–268 (TSII…SLTL), 291–311 (LLGI…VFIC), 331–351 (IVQI…TSLL), 399–419 (LLMI…IIVS), and 443–463 (FIFG…CVLV).

The protein resides in the membrane. Functionally, required for production of the bacteriocin SkfA. This Bacillus subtilis (strain 168) protein is Sporulation-killing factor biosynthesis protein SkfC.